The primary structure comprises 130 residues: MHHQKQQQQQKQQGEAPCRHLQWRLSGVVLCVLVVASLVSTAASSPLDPHHLAKRSFFDIQCKGVYDKSIFARLDRICEDCYNLFREPQLHSLCRSDCFKSPYFKGCLQALLLIDEEEKFNQMVEILGKK.

Intrachain disulfides connect Cys62-Cys98, Cys78-Cys94, and Cys81-Cys107. Leu127 is modified (leucine amide).

Belongs to the arthropod CHH/MIH/GIH/VIH hormone family. As to expression, brain and corpus cardiacum.

It is found in the secreted. Functionally, stimulates salt and water reabsorption and inhibits acid secretion in the ileum of S.gregaria. This is Ion transport peptide from Schistocerca gregaria (Desert locust).